A 151-amino-acid chain; its full sequence is MVDESNAGPVAPAVVADAEVKAPTGKKRSSSRPQKAPPEPAQPKMPAAKRRGYSEQERSEKLRLIETKVSEGNTLKDAIKSAGISEQTYYHWKGAAKSAAREDIERTRPLSAGDEFAELVQLEEENQRLRKQLAEKLRTENTELRKRLGLD.

The disordered stretch occupies residues 1-65 (MVDESNAGPV…QERSEKLRLI (65 aa)). The span at 7–23 (AGPVAPAVVADAEVKAP) shows a compositional bias: low complexity. Positions 52-65 (GYSEQERSEKLRLI) are enriched in basic and acidic residues.

Belongs to the SyrB family.

This chain is Probable transcriptional regulator syrB3 (syrB3), found in Rhizobium meliloti (strain 1021) (Ensifer meliloti).